A 111-amino-acid polypeptide reads, in one-letter code: MVRTKANSVPGSYRKVVASRAPRKVLGSSTSAANSTPLSSRKAENKYAGGNPVCVRPTPKWQKGIGEFFSLSPKDSEKENRIPEEAGSSGLGKAKRKACPLPPDHTDDEKE.

Over residues 1–10 the composition is skewed to polar residues; sequence MVRTKANSVP. A disordered region spans residues 1–111; the sequence is MVRTKANSVP…PPDHTDDEKE (111 aa). Serine 8 carries the post-translational modification Phosphoserine. A Glycyl lysine isopeptide (Lys-Gly) (interchain with G-Cter in ubiquitin) cross-link involves residue lysine 15. Residues 23–34 carry the D-box motif; that stretch reads RKVLGSSTSAAN. At lysine 24 the chain carries N6-acetyllysine; alternate. Residue lysine 24 forms a Glycyl lysine isopeptide (Lys-Gly) (interchain with G-Cter in ubiquitin); alternate linkage. Residues 27-39 are compositionally biased toward polar residues; the sequence is GSSTSAANSTPLS. 3 positions are modified to phosphoserine: serine 28, serine 31, and serine 72. The short motif at 62-72 is the PIP-box element; that stretch reads QKGIGEFFSLS. Basic and acidic residues predominate over residues 74 to 84; it reads KDSEKENRIPE. The KEN box signature appears at 78–80; sequence KEN. Positions 85-97 match the Initiation motif motif; sequence EAGSSGLGKAKRK.

As to quaternary structure, interacts (when monoubiquitinated at Lys-15 and Lys-24) with PCNA. Interacts with isoform 2/p33ING1b of ING1. Interacts with BRCA1. Post-translationally, monoubiquitinated at Lys-15 and Lys-24 during normal S phase, promoting its association with PCNA. Also diubiquitinated at these 2 sites. Following DNA damage, monoubiquitin chains at Lys-15 and Lys-24 are probably extended, leading to disrupt the interaction with PCNA. Polyubiquitinated by the APC/C complex at the mitotic exit, leading to its degradation by the proteasome.

It is found in the nucleus. The protein resides in the cytoplasm. It localises to the perinuclear region. PCNA-binding protein that acts as a regulator of DNA repair during DNA replication. Following DNA damage, the interaction with PCNA is disrupted, facilitating the interaction between monoubiquitinated PCNA and the translesion DNA synthesis DNA polymerase eta (POLH) at stalled replisomes, facilitating the bypass of replication-fork-blocking lesions. Also acts as a regulator of centrosome number. This Bos taurus (Bovine) protein is PCNA-associated factor.